The sequence spans 407 residues: 12S rRNA N(4)-cytidine methyltransferase METTL15 (407 aa).

Residues 100-102 (GGH), Asp119, Phe146, Asp169, and Gln176 each bind S-adenosyl-L-methionine. At Ser358 the chain carries Phosphoserine.

This sequence belongs to the methyltransferase superfamily. RsmH family.

Its subcellular location is the mitochondrion matrix. It carries out the reaction cytidine(839) in 12S rRNA + S-adenosyl-L-methionine = N(4)-methylcytidine(839) in 12S rRNA + S-adenosyl-L-homocysteine + H(+). Its function is as follows. N4-methylcytidine (m4C) methyltransferase responsible for the methylation of position C839 in mitochondrial 12S rRNA. Involved in the stabilization of 12S rRNA folding, therefore facilitating the assembly of the mitochondrial small ribosomal subunits. This chain is 12S rRNA N(4)-cytidine methyltransferase METTL15 (METTL15), found in Pongo abelii (Sumatran orangutan).